We begin with the raw amino-acid sequence, 193 residues long: Bcl-2-like protein 2 (193 aa).

The residue at position 2 (A2) is an N-acetylalanine. Positions 9–29 match the BH4 motif; the sequence is DTRALVADFVGYKLRQKGYVC. Residues 85 to 104 carry the BH1 motif; that stretch reads ELFQGGPNWGRLVAFFVFGA. A BH2 motif is present at residues 136–151; that stretch reads DWIHSSGGWAEFTALY.

Belongs to the Bcl-2 family. As to quaternary structure, interacts with HIF3A (via C-terminus domain). Interacts with BOP.

It is found in the mitochondrion membrane. Promotes cell survival. Blocks dexamethasone-induced apoptosis. Mediates survival of postmitotic Sertoli cells by suppressing death-promoting activity of BAX. The polypeptide is Bcl-2-like protein 2 (BCL2L2) (Bos taurus (Bovine)).